Reading from the N-terminus, the 123-residue chain is Large ribosomal subunit protein bL12 (123 aa).

The protein belongs to the bacterial ribosomal protein bL12 family. Homodimer. Part of the ribosomal stalk of the 50S ribosomal subunit. Forms a multimeric L10(L12)X complex, where L10 forms an elongated spine to which 2 to 4 L12 dimers bind in a sequential fashion. Binds GTP-bound translation factors.

Its function is as follows. Forms part of the ribosomal stalk which helps the ribosome interact with GTP-bound translation factors. Is thus essential for accurate translation. The sequence is that of Large ribosomal subunit protein bL12 from Marinomonas sp. (strain MWYL1).